A 334-amino-acid chain; its full sequence is Glyceraldehyde-3-phosphate dehydrogenase (334 aa).

NAD(+) contacts are provided by residues 12–13 (TI) and G111. 140-142 (SCN) provides a ligand contact to D-glyceraldehyde 3-phosphate. The active-site Nucleophile is C141. R167 is an NAD(+) binding site. D-glyceraldehyde 3-phosphate is bound at residue 192-193 (HG). Q298 provides a ligand contact to NAD(+).

This sequence belongs to the glyceraldehyde-3-phosphate dehydrogenase family. As to quaternary structure, homotetramer.

It is found in the cytoplasm. It catalyses the reaction D-glyceraldehyde 3-phosphate + phosphate + NADP(+) = (2R)-3-phospho-glyceroyl phosphate + NADPH + H(+). It carries out the reaction D-glyceraldehyde 3-phosphate + phosphate + NAD(+) = (2R)-3-phospho-glyceroyl phosphate + NADH + H(+). It participates in carbohydrate degradation; glycolysis; pyruvate from D-glyceraldehyde 3-phosphate: step 1/5. The polypeptide is Glyceraldehyde-3-phosphate dehydrogenase (Thermococcus kodakarensis (strain ATCC BAA-918 / JCM 12380 / KOD1) (Pyrococcus kodakaraensis (strain KOD1))).